Reading from the N-terminus, the 766-residue chain is Probable beta-glucosidase K (766 aa).

An N-linked (GlcNAc...) asparagine glycan is attached at Asn-19. Asp-196 is an active-site residue. N-linked (GlcNAc...) asparagine glycosylation is found at Asn-288, Asn-453, and Asn-748. The region spanning 369–528 is the PA14 domain; the sequence is EGQPGLGMRF…DPERAIARAV (160 aa). The segment at 726-766 is disordered; the sequence is LGRRGRSGSSPAVYRGRSNNVVNRTSHQGAQRISKGGFAAR. A compositionally biased stretch (polar residues) spans 742–756; it reads RSNNVVNRTSHQGAQ.

It belongs to the glycosyl hydrolase 3 family.

Its subcellular location is the secreted. The enzyme catalyses Hydrolysis of terminal, non-reducing beta-D-glucosyl residues with release of beta-D-glucose.. Its pathway is glycan metabolism; cellulose degradation. Functionally, beta-glucosidases are one of a number of cellulolytic enzymes involved in the degradation of cellulosic biomass. Catalyzes the last step releasing glucose from the inhibitory cellobiose. This chain is Probable beta-glucosidase K (bglK), found in Aspergillus fumigatus (strain CBS 144.89 / FGSC A1163 / CEA10) (Neosartorya fumigata).